Reading from the N-terminus, the 417-residue chain is METATRTHQQRKLISSFLDITVNQTVEIATQFLEATTWNLEDAINLFLIARRNPHHHHGEELVPLPLPSKKNTLYDYDPFMSHNTSVAVCPEEIWDDESTSEESDSRLSSLYRPPPSLFFHGSFEDAKATSSREDLWLLVNLQSTTEFASHLLNRDLWPHDAVFQAIKSSFILLQVYDDTSEGQKISTFYKIDSVPPVVLLIDPITGQKMRMWSGVIEPQGFLEDLMKYMDSGPHEHVASLTSNKRMKTEKISCSSNNADDQDMATFWGNAIEEEKTVIKSGKEETFTSDRVVAPSWGPEFEDIMTLSEHEEETCLSCDLLEFPVLTEEPKADCDRSVVCSICVRFPDGRRKQRKFLKSEPIQLLWSFCYSHMEESEKKEFKLVQAIPGASKTLDYGAKATFDQSGIANSMISVTWE.

The region spanning 335-415 is the UBX domain; it reads DRSVVCSICV…GIANSMISVT (81 aa).

The polypeptide is Putative plant UBX domain-containing protein 14 (Arabidopsis thaliana (Mouse-ear cress)).